Reading from the N-terminus, the 135-residue chain is MACGLVASNLNLKPGECLRVRGEVTPDAKSFVLNLGKASNNLCLHFNPRFNAHGDANTIVCNSKDGGAWGTEQREAVFPFQPGSVAEVCITFDQTNLTIKLPDGYEFKFPNRLNLEAINYMAADGDFKIKCVAFD.

Residue Ala-2 is modified to N-acetylalanine. The Galectin domain maps to 4 to 135 (GLVASNLNLK…DFKIKCVAFD (132 aa)). Lys-13 and Lys-29 each carry N6-acetyllysine. Ser-30 bears the Phosphoserine mark. Residues 45 to 49 (HFNPR), His-53, Asn-62, and 69 to 72 (WGTE) each bind a beta-D-galactoside. Lys-108 carries the N6-acetyllysine; alternate modification. Lys-108 carries the post-translational modification N6-succinyllysine; alternate. Lys-128 bears the N6-acetyllysine mark.

As to quaternary structure, homodimer. Binds LGALS3BP. Interacts with CD2, CD3, CD4, CD6, CD7, CD43, ALCAM and CD45. Interacts with laminin (via poly-N-acetyllactosamine). Interacts with SUSD2.

The protein resides in the secreted. The protein localises to the extracellular space. It localises to the extracellular matrix. Lectin that binds beta-galactoside and a wide array of complex carbohydrates. Plays a role in regulating apoptosis, cell proliferation and cell differentiation. Inhibits CD45 protein phosphatase activity and therefore the dephosphorylation of Lyn kinase. Strong inducer of T-cell apoptosis. The chain is Galectin-1 (LGALS1) from Pongo abelii (Sumatran orangutan).